Consider the following 300-residue polypeptide: Ribosomal RNA small subunit methyltransferase H (300 aa).

Residues 46–48 (GGH), Asp65, Phe92, Asp107, and Gln114 contribute to the S-adenosyl-L-methionine site.

Belongs to the methyltransferase superfamily. RsmH family.

Its subcellular location is the cytoplasm. It carries out the reaction cytidine(1402) in 16S rRNA + S-adenosyl-L-methionine = N(4)-methylcytidine(1402) in 16S rRNA + S-adenosyl-L-homocysteine + H(+). In terms of biological role, specifically methylates the N4 position of cytidine in position 1402 (C1402) of 16S rRNA. In Prochlorococcus marinus (strain MIT 9301), this protein is Ribosomal RNA small subunit methyltransferase H.